Reading from the N-terminus, the 313-residue chain is Olfactory receptor 1J4 (313 aa).

The Extracellular portion of the chain corresponds to 1–25 (MKRENQSSVSEFLLLDLPIWPEQQA). Asparagine 5 carries an N-linked (GlcNAc...) asparagine glycan. The chain crosses the membrane as a helical span at residues 26–49 (VFFTLFLGMYLITVLGNLLIILLI). Over 50–57 (RLDSHLHT) the chain is Cytoplasmic. Residues 58–79 (PMFFFLSHLALTDISLSSVTVP) traverse the membrane as a helical segment. Over 80 to 100 (KMLLSMQTQDQSILYAGCVTQ) the chain is Extracellular. Cysteine 97 and cysteine 189 are joined by a disulfide. The chain crosses the membrane as a helical span at residues 101 to 120 (MYFFIFFTDLDNFLLTSMAY). The Cytoplasmic portion of the chain corresponds to 121–139 (DRYVAICHPLRYTTIMKEG). The chain crosses the membrane as a helical span at residues 140–158 (LCNLLVTVSWILSCTNALS). Residues 159 to 195 (HTLLLAQLSFCADNTIPHFFCDLVALLKLSCSDISLN) are Extracellular-facing. Residues 196–219 (ELVIFTVGQAVITLPLICILISYG) traverse the membrane as a helical segment. Topologically, residues 220–236 (HIGVTILKAPSTKGIFK) are cytoplasmic. A helical membrane pass occupies residues 237–259 (ALSTCGSHLSVVSLYYGTIIGLY). Over 260-272 (FLPSSSASSDKDV) the chain is Extracellular. A helical membrane pass occupies residues 273-292 (IASVMYTVITPLLNPFIYSL). At 293–313 (RNRDIKGALERLFNRATVLSQ) the chain is on the cytoplasmic side.

It belongs to the G-protein coupled receptor 1 family.

The protein resides in the cell membrane. Its function is as follows. Odorant receptor. In Homo sapiens (Human), this protein is Olfactory receptor 1J4 (OR1J4).